The chain runs to 626 residues: Chaperone protein HtpG (626 aa).

The segment at 1 to 341 (MIKKEFKAES…SEDLSLNISR (341 aa)) is a; substrate-binding. The b stretch occupies residues 342–552 (EMLQHDRQLK…DGDVTIEMEK (211 aa)). The interval 553–626 (ILSAMPNNQE…FTNDICKLMS (74 aa)) is c.

Belongs to the heat shock protein 90 family. As to quaternary structure, homodimer.

The protein localises to the cytoplasm. Its function is as follows. Molecular chaperone. Has ATPase activity. In Alkaliphilus metalliredigens (strain QYMF), this protein is Chaperone protein HtpG.